We begin with the raw amino-acid sequence, 510 residues long: GMP synthase [glutamine-hydrolyzing] (510 aa).

In terms of domain architecture, Glutamine amidotransferase type-1 spans methionine 5–aspartate 195. Catalysis depends on cysteine 82, which acts as the Nucleophile. Residues histidine 169 and glutamate 171 contribute to the active site. A GMPS ATP-PPase domain is found at tryptophan 196–arginine 385. Residue serine 223–serine 229 participates in ATP binding.

As to quaternary structure, homodimer.

It carries out the reaction XMP + L-glutamine + ATP + H2O = GMP + L-glutamate + AMP + diphosphate + 2 H(+). It participates in purine metabolism; GMP biosynthesis; GMP from XMP (L-Gln route): step 1/1. In terms of biological role, catalyzes the synthesis of GMP from XMP. This chain is GMP synthase [glutamine-hydrolyzing], found in Geobacillus kaustophilus (strain HTA426).